Reading from the N-terminus, the 405-residue chain is Replication factor C large subunit (405 aa).

47-54 is a binding site for ATP; sequence GPPGVGKT.

This sequence belongs to the activator 1 small subunits family. RfcL subfamily. In terms of assembly, heteromultimer composed of small subunits (RfcS) and large subunits (RfcL).

Part of the RFC clamp loader complex which loads the PCNA sliding clamp onto DNA. The sequence is that of Replication factor C large subunit from Saccharolobus islandicus (strain M.16.4 / Kamchatka #3) (Sulfolobus islandicus).